The sequence spans 453 residues: Midnolin-A (453 aa).

A Ubiquitin-like domain is found at 20 to 94 (MNLNIQSTTG…LTLLPSVEAG (75 aa)). Disordered regions lie at residues 184 to 219 (SHLA…TTSV), 232 to 256 (CAEQ…RSRK), 333 to 376 (RNAK…ENRA), and 390 to 429 (QKRL…EGSL). Residues 206 to 219 (HCNGPHSSPLTTSV) are compositionally biased toward polar residues. 2 stretches are compositionally biased toward low complexity: residues 239-252 (STRG…SPSS) and 338-351 (TSPQ…TTHP). A compositionally biased stretch (basic and acidic residues) spans 365–376 (SGDRLRQTENRA). A compositionally biased stretch (basic residues) spans 390–399 (QKRLRRKARR). A compositionally biased stretch (low complexity) spans 415–428 (RTSSNSSTSSGEGS).

It is found in the nucleus. It localises to the cytoplasm. The protein localises to the cytosol. Its subcellular location is the nucleolus. In terms of biological role, facilitates ubiquitin-independent proteasomal degradation of polycomb protein CBX4. Plays a role in inhibiting the activity of glucokinase GCK and both glucose-induced and basal insulin secretion. This chain is Midnolin-A (midn-a), found in Xenopus laevis (African clawed frog).